A 310-amino-acid polypeptide reads, in one-letter code: Porphobilinogen deaminase (310 aa).

Cysteine 242 is subject to S-(dipyrrolylmethanemethyl)cysteine.

It belongs to the HMBS family. As to quaternary structure, monomer. It depends on dipyrromethane as a cofactor.

The enzyme catalyses 4 porphobilinogen + H2O = hydroxymethylbilane + 4 NH4(+). It functions in the pathway porphyrin-containing compound metabolism; protoporphyrin-IX biosynthesis; coproporphyrinogen-III from 5-aminolevulinate: step 2/4. In terms of biological role, tetrapolymerization of the monopyrrole PBG into the hydroxymethylbilane pre-uroporphyrinogen in several discrete steps. This Shewanella sp. (strain ANA-3) protein is Porphobilinogen deaminase.